Reading from the N-terminus, the 40-residue chain is Large ribosomal subunit protein bL36 (40 aa).

It belongs to the bacterial ribosomal protein bL36 family.

The chain is Large ribosomal subunit protein bL36 from Corynebacterium glutamicum (strain R).